Here is an 88-residue protein sequence, read N- to C-terminus: Cytochrome c6 (88 aa).

Positions 15, 18, 19, and 61 each coordinate heme c.

Belongs to the cytochrome c family. PetJ subfamily. As to quaternary structure, monomer. In terms of processing, binds 1 heme c group covalently per subunit.

It is found in the plastid. The protein resides in the chloroplast thylakoid lumen. Its function is as follows. Functions as an electron carrier between membrane-bound cytochrome b6-f and photosystem I in oxygenic photosynthesis. The polypeptide is Cytochrome c6 (petJ) (Bryopsis maxima (Green alga)).